Consider the following 522-residue polypeptide: Protein nucleotidyltransferase YdiU (522 aa).

8 residues coordinate ATP: Gly-109, Gly-111, Arg-112, Lys-132, Asp-144, Gly-145, Arg-195, and Arg-202. The active-site Proton acceptor is Asp-271. 2 residues coordinate Mg(2+): Asn-272 and Asp-281. Asp-281 serves as a coordination point for ATP.

It belongs to the SELO family. Requires Mg(2+) as cofactor. Mn(2+) is required as a cofactor.

It catalyses the reaction L-seryl-[protein] + ATP = 3-O-(5'-adenylyl)-L-seryl-[protein] + diphosphate. It carries out the reaction L-threonyl-[protein] + ATP = 3-O-(5'-adenylyl)-L-threonyl-[protein] + diphosphate. The catalysed reaction is L-tyrosyl-[protein] + ATP = O-(5'-adenylyl)-L-tyrosyl-[protein] + diphosphate. The enzyme catalyses L-histidyl-[protein] + UTP = N(tele)-(5'-uridylyl)-L-histidyl-[protein] + diphosphate. It catalyses the reaction L-seryl-[protein] + UTP = O-(5'-uridylyl)-L-seryl-[protein] + diphosphate. It carries out the reaction L-tyrosyl-[protein] + UTP = O-(5'-uridylyl)-L-tyrosyl-[protein] + diphosphate. In terms of biological role, nucleotidyltransferase involved in the post-translational modification of proteins. It can catalyze the addition of adenosine monophosphate (AMP) or uridine monophosphate (UMP) to a protein, resulting in modifications known as AMPylation and UMPylation. This chain is Protein nucleotidyltransferase YdiU, found in Burkholderia multivorans (strain ATCC 17616 / 249).